A 428-amino-acid polypeptide reads, in one-letter code: Histidine--tRNA ligase (428 aa).

It belongs to the class-II aminoacyl-tRNA synthetase family. As to quaternary structure, homodimer.

It is found in the cytoplasm. It carries out the reaction tRNA(His) + L-histidine + ATP = L-histidyl-tRNA(His) + AMP + diphosphate + H(+). The chain is Histidine--tRNA ligase from Azotobacter vinelandii (strain DJ / ATCC BAA-1303).